We begin with the raw amino-acid sequence, 316 residues long: 4-hydroxy-3-methylbut-2-enyl diphosphate reductase (316 aa).

[4Fe-4S] cluster is bound at residue C12. The (2E)-4-hydroxy-3-methylbut-2-enyl diphosphate site is built by H43 and H81. Residues H43 and H81 each contribute to the dimethylallyl diphosphate site. Positions 43 and 81 each coordinate isopentenyl diphosphate. Residue C103 coordinates [4Fe-4S] cluster. H131 provides a ligand contact to (2E)-4-hydroxy-3-methylbut-2-enyl diphosphate. Residue H131 participates in dimethylallyl diphosphate binding. H131 is a binding site for isopentenyl diphosphate. The Proton donor role is filled by E133. T170 serves as a coordination point for (2E)-4-hydroxy-3-methylbut-2-enyl diphosphate. Position 198 (C198) interacts with [4Fe-4S] cluster. (2E)-4-hydroxy-3-methylbut-2-enyl diphosphate-binding residues include S226, N228, and S271. Dimethylallyl diphosphate is bound by residues S226, N228, and S271. Residues S226, N228, and S271 each coordinate isopentenyl diphosphate.

This sequence belongs to the IspH family. The cofactor is [4Fe-4S] cluster.

It carries out the reaction isopentenyl diphosphate + 2 oxidized [2Fe-2S]-[ferredoxin] + H2O = (2E)-4-hydroxy-3-methylbut-2-enyl diphosphate + 2 reduced [2Fe-2S]-[ferredoxin] + 2 H(+). It catalyses the reaction dimethylallyl diphosphate + 2 oxidized [2Fe-2S]-[ferredoxin] + H2O = (2E)-4-hydroxy-3-methylbut-2-enyl diphosphate + 2 reduced [2Fe-2S]-[ferredoxin] + 2 H(+). Its pathway is isoprenoid biosynthesis; dimethylallyl diphosphate biosynthesis; dimethylallyl diphosphate from (2E)-4-hydroxy-3-methylbutenyl diphosphate: step 1/1. The protein operates within isoprenoid biosynthesis; isopentenyl diphosphate biosynthesis via DXP pathway; isopentenyl diphosphate from 1-deoxy-D-xylulose 5-phosphate: step 6/6. Functionally, catalyzes the conversion of 1-hydroxy-2-methyl-2-(E)-butenyl 4-diphosphate (HMBPP) into a mixture of isopentenyl diphosphate (IPP) and dimethylallyl diphosphate (DMAPP). Acts in the terminal step of the DOXP/MEP pathway for isoprenoid precursor biosynthesis. In Bacillus cereus (strain AH820), this protein is 4-hydroxy-3-methylbut-2-enyl diphosphate reductase.